Here is a 74-residue protein sequence, read N- to C-terminus: Cytochrome c oxidase assembly factor 5 (74 aa).

Residues 27 to 65 (QSDCVVQEGKSPRQCLKEGYCNSLKYAFFECKRSVLDNR) enclose the CHCH domain. Positions 30–41 (CVVQEGKSPRQC) match the Cx10C motif motif. 2 cysteine pairs are disulfide-bonded: Cys30–Cys57 and Cys41–Cys47. Ser37 carries the post-translational modification Phosphoserine. A Cx9C motif motif is present at residues 47–57 (CNSLKYAFFEC).

Belongs to the PET191 family.

Involved in an early step of the mitochondrial complex IV assembly process. The sequence is that of Cytochrome c oxidase assembly factor 5 (COA5) from Homo sapiens (Human).